Reading from the N-terminus, the 74-residue chain is Putative defensin-like protein 36 (74 aa).

The N-terminal stretch at 1 to 22 (MASNKVSFFLVLCLCILLAGEC) is a signal peptide. 3 disulfides stabilise this stretch: C33/C59, C45/C69, and C49/C71.

This sequence belongs to the DEFL family.

It localises to the secreted. This is Putative defensin-like protein 36 from Arabidopsis thaliana (Mouse-ear cress).